Here is a 1105-residue protein sequence, read N- to C-terminus: AP-3 complex subunit beta-1 (1105 aa).

Disordered regions lie at residues 1 to 26 (MSSN…EATS) and 271 to 292 (KNFY…KKSY). Residues Ser-276 and Ser-610 each carry the phosphoserine modification. The interval 668–824 (KKEKPMKKFY…KPQQERHPPS (157 aa)) is disordered. A compositionally biased stretch (acidic residues) spans 679-704 (ESEEEEDEDEDEDEEEEEKEDEDENP). Composition is skewed to low complexity over residues 705 to 722 (SDSS…SGDT) and 730 to 741 (DSSSGQDSETGS). Over residues 750–759 (VAKRNSKTKR) the composition is skewed to basic residues. Positions 760 to 774 (KSDSENREKKNENSK) are enriched in basic and acidic residues. A phosphoserine mark is found at Ser-761 and Ser-763. Positions 775–788 (ASESSSEESSSMED) are enriched in low complexity. Residues 789 to 799 (SSSESESESGS) show a composition bias toward acidic residues. Positions 811-824 (AKERKPQQERHPPS) are enriched in basic and acidic residues.

It belongs to the adaptor complexes large subunit family. Adaptor protein complex 3 (AP-3) is a heterotetramer composed of two large adaptins (delta-type subunit AP3D1 and beta-type subunit AP3B1 or AP3B2), a medium adaptin (mu-type subunit AP3M1 or AP3M2) and a small adaptin (sigma-type subunit APS1 or AP3S2). AP-3 associates with the BLOC-1 complex. Interacts with KIF3A; interaction is direct; interaction is impaired by pyrophosphorylation of AP3B1. Phosphorylated on serine residues. Post-translationally, pyrophosphorylated by 5-diphosphoinositol pentakisphosphate (5-IP7). Pyrophosphorylation impairs interaction with KIF3A. Serine pyrophosphorylation is achieved by Mg(2+)-dependent, but enzyme independent transfer of a beta-phosphate from a inositol pyrophosphate to a pre-phosphorylated serine residue. As to expression, ubiquitously expressed.

Its subcellular location is the cytoplasmic vesicle. The protein localises to the clathrin-coated vesicle membrane. It is found in the golgi apparatus. Its function is as follows. Subunit of non-clathrin- and clathrin-associated adaptor protein complex 3 (AP-3) that plays a role in protein sorting in the late-Golgi/trans-Golgi network (TGN) and/or endosomes. The AP complexes mediate both the recruitment of clathrin to membranes and the recognition of sorting signals within the cytosolic tails of transmembrane cargo molecules. AP-3 appears to be involved in the sorting of a subset of transmembrane proteins targeted to lysosomes and lysosome-related organelles. In concert with the BLOC-1 complex, AP-3 is required to target cargos into vesicles assembled at cell bodies for delivery into neurites and nerve terminals. In Mus musculus (Mouse), this protein is AP-3 complex subunit beta-1 (Ap3b1).